Reading from the N-terminus, the 44-residue chain is Photosystem I reaction center subunit IX (44 aa).

A helical transmembrane segment spans residues 7–27 (YLSTAPVLTTLWFGSLAGLLI).

The protein belongs to the PsaJ family.

Its subcellular location is the plastid. It localises to the chloroplast thylakoid membrane. In terms of biological role, may help in the organization of the PsaE and PsaF subunits. The polypeptide is Photosystem I reaction center subunit IX (Phalaenopsis aphrodite subsp. formosana (Moth orchid)).